Here is a 617-residue protein sequence, read N- to C-terminus: Chaperone protein HscA homolog (617 aa).

It belongs to the heat shock protein 70 family.

Its function is as follows. Chaperone involved in the maturation of iron-sulfur cluster-containing proteins. Has a low intrinsic ATPase activity which is markedly stimulated by HscB. The protein is Chaperone protein HscA homolog of Actinobacillus pleuropneumoniae serotype 5b (strain L20).